The primary structure comprises 329 residues: Deoxynucleotidyltransferase terminal-interacting protein 1 (329 aa).

Disordered regions lie at residues 1-22 (MGAT…GGLE) and 147-178 (KRGR…ILSS). The important for dimerization stretch occupies residues 56–147 (MTTSFTDPAI…RLTHELPGIK (92 aa)). Basic and acidic residues predominate over residues 147–158 (KRGRQAEEECAH). Residues 159-173 (RGSPLPKKRKGRPPG) constitute a DNA-binding region (a.T hook). Position 161 is a phosphoserine (Ser-161). The Nuclear localization signal signature appears at 164 to 170 (PKKRKGR). Residues 197–316 (REGPKWDPAR…MRKYMETLRT (120 aa)) form an important for DNA and nucleosome binding region. The H-T-H motif DNA-binding region spans 216 to 237 (GSRANKALGMGGTRGRIYIKHP).

Monomer and homodimer. A minor proportion may form homotrimers. Interacts with ZNF541. Interacts with the terminal deoxynucleotidyltransferase DNTT. Interacts with TRERF1. Identified in a histone deacetylase complex that contains DNTTIP1, HDAC1 and MIDEAS; this complex assembles into a tetramer that contains four copies of each protein chain. Component of a histone deacetylase complex containing DNTTIP1, ZNF541, HDAC1 and HDAC2. Identified in a complex with KCTD19, HDAC1, HDAC2 and ZNF541.

The protein localises to the nucleus. Increases DNTT terminal deoxynucleotidyltransferase activity (in vitro). Also acts as a transcriptional regulator, binding to the consensus sequence 5'-GNTGCATG-3' following an AT-tract. Associates with RAB20 promoter and positively regulates its transcription. Binds DNA and nucleosomes; may recruit HDAC1 complexes to nucleosomes or naked DNA. The polypeptide is Deoxynucleotidyltransferase terminal-interacting protein 1 (DNTTIP1) (Homo sapiens (Human)).